The sequence spans 137 residues: MSSLVRRIISTAKAPAAIGPYSQAVLVDRTIYISGQLGMDPASGQLVPGGVVEEAKQALTNIGEILKAAGCDFTNVVKATVLLADINDFSAVNDVYKQYFQSSFPARAAYQVAALPKGGRVEIEAIAVQGPLTTASL.

Position 2 is an N-acetylserine (S2). An N6-succinyllysine mark is found at K13 and K67. T74 is modified (phosphothreonine). S136 is subject to Phosphoserine.

As to quaternary structure, homotrimer. Interacts with YTHDF2. In terms of tissue distribution, expressed by various malignant neoplasms.

Its subcellular location is the cytoplasm. It localises to the nucleus. It is found in the peroxisome. The protein localises to the mitochondrion. The enzyme catalyses 2-iminobutanoate + H2O = 2-oxobutanoate + NH4(+). It carries out the reaction 2-iminopropanoate + H2O = pyruvate + NH4(+). Catalyzes the hydrolytic deamination of enamine/imine intermediates that form during the course of normal metabolism. May facilitate the release of ammonia from these potentially toxic reactive metabolites, reducing their impact on cellular components. It may act on enamine/imine intermediates formed by several types of pyridoxal-5'-phosphate-dependent dehydratases including L-threonine dehydratase. In terms of biological role, also promotes endoribonucleolytic cleavage of some transcripts by promoting recruitment of the ribonuclease P/MRP complex. Acts by bridging YTHDF2 and the ribonuclease P/MRP complex. RIDA/HRSP12 binds to N6-methyladenosine (m6A)-containing mRNAs containing a 5'-GGUUC-3' motif: cooperative binding of RIDA/HRSP12 and YTHDF2 to such transcripts lead to recruitment of the ribonuclease P/MRP complex and subsequent endoribonucleolytic cleavage. This is 2-iminobutanoate/2-iminopropanoate deaminase from Capra hircus (Goat).